Consider the following 1338-residue polypeptide: Aldehyde oxidase 1 (1338 aa).

One can recognise a 2Fe-2S ferredoxin-type domain in the interval Ser-5 to Ile-92. Mo-molybdopterin is bound by residues Gln-113 and Cys-151. The 186-residue stretch at Phe-236–Lys-421 folds into the FAD-binding PCMH-type domain. Residues Val-264–Val-271, Ala-345, Ser-354, His-358, Asp-367, and Leu-411 each bind FAD. Residues Ala-806 to Phe-807 and Met-1047 each bind Mo-molybdopterin. Residue Ser-1068 is modified to Phosphoserine. Mo-molybdopterin contacts are provided by residues Gly-1088–Val-1091, Gln-1203, and Leu-1268. Glu-1270 (proton acceptor; for azaheterocycle hydroxylase activity) is an active-site residue.

Belongs to the xanthine dehydrogenase family. As to quaternary structure, homodimer. It depends on [2Fe-2S] cluster as a cofactor. FAD is required as a cofactor. Requires Mo-molybdopterin as cofactor. As to expression, detected at high levels in liver, also detected in lung, kidney, lacrimal gland and olfactory mucosa.

The protein localises to the cytoplasm. It carries out the reaction an aldehyde + O2 + H2O = a carboxylate + H2O2 + H(+). It catalyses the reaction retinal + O2 + H2O = retinoate + H2O2 + H(+). Oxidase with broad substrate specificity, oxidizing aromatic azaheterocycles, such as N1-methylnicotinamide, N-methylphthalazinium and phthalazine, as well as aldehydes, such as benzaldehyde, retinal, pyridoxal, and vanillin. Plays a key role in the metabolism of xenobiotics and drugs containing aromatic azaheterocyclic substituents. Participates in the bioactivation of prodrugs such as famciclovir, catalyzing the oxidation step from 6-deoxypenciclovir to penciclovir, which is a potent antiviral agent. Is probably involved in the regulation of reactive oxygen species homeostasis. May be a prominent source of superoxide generation via the one-electron reduction of molecular oxygen. May also catalyze nitric oxide (NO) production via the reduction of nitrite to NO with NADH or aldehyde as electron donor. May play a role in adipogenesis. The chain is Aldehyde oxidase 1 (AOX1) from Macaca fascicularis (Crab-eating macaque).